The following is a 386-amino-acid chain: MAIRKSQVYLSTVNSYLIDSPQPSTINYWYNTGSLTGLCLVIQIASGIFTAMHYSSHIDLAFASVEHIMRDVNYGYLIRYIHANGASFFFVCMYGHIGKALYYGSYKSPRVLVWVIGVIIFITTMATAFTGYCCVYGQMSHWGATVITNTLSAIPFIGNDLVPFIWGSFSVSNPTIQRFFALHYLCPFILAALVVMHLMALHVHGSTNPLGISSNIDRLPFHGYFVFKDLVTVFVFLLIFSTFVFFSPNTLGHPDNYIPGNPLVTPASIVPEWYTLPFYAILRSIPDKLGGVIAMFGSILITLVLPVTDRSVIKGNTFKIFSKTLYFTFTYNFILLGQLGQLHVEVPFIEMGQIATFNYFTYFIVLVPLVSTLENILFYIGRVTTK.

Helical transmembrane passes span 32-52 (TGSL…FTAM), 76-98 (YLIR…GHIG), 113-133 (VWVI…TGYC), and 179-199 (FFAL…MHLM). Positions 82 and 96 each coordinate heme b. Positions 183 and 197 each coordinate heme b. His-202 is an a ubiquinone binding site. The next 4 helical transmembrane spans lie at 225-245 (FVFK…TFVF), 289-309 (LGGV…PVTD), 321-341 (FSKT…QLGQ), and 348-368 (FIEM…VLVP).

It belongs to the cytochrome b family. In terms of assembly, fungal cytochrome b-c1 complex contains 10 subunits; 3 respiratory subunits, 2 core proteins and 5 low-molecular weight proteins. Cytochrome b-c1 complex is a homodimer. Heme b is required as a cofactor.

It localises to the mitochondrion inner membrane. Its function is as follows. Component of the ubiquinol-cytochrome c reductase complex (complex III or cytochrome b-c1 complex) that is part of the mitochondrial respiratory chain. The b-c1 complex mediates electron transfer from ubiquinol to cytochrome c. Contributes to the generation of a proton gradient across the mitochondrial membrane that is then used for ATP synthesis. This Wickerhamomyces pijperi (Yeast) protein is Cytochrome b (COB).